Reading from the N-terminus, the 327-residue chain is Phenylalanine--tRNA ligase alpha subunit (327 aa).

Mg(2+) is bound at residue Glu252.

This sequence belongs to the class-II aminoacyl-tRNA synthetase family. Phe-tRNA synthetase alpha subunit type 1 subfamily. In terms of assembly, tetramer of two alpha and two beta subunits. Mg(2+) is required as a cofactor.

It is found in the cytoplasm. The enzyme catalyses tRNA(Phe) + L-phenylalanine + ATP = L-phenylalanyl-tRNA(Phe) + AMP + diphosphate + H(+). This is Phenylalanine--tRNA ligase alpha subunit from Yersinia pestis bv. Antiqua (strain Antiqua).